The sequence spans 553 residues: Pseudouridylate synthase RPUSD2 (553 aa).

Residues 76–135 form a disordered region; it reads AVGKQVPESGDQAQGGEGQLPSNGEQTPAPVADSGKRKKRRGATGERVVPPPKKRRTGVS. The active site involves Asp-287. Thr-490 is modified (phosphothreonine).

This sequence belongs to the pseudouridine synthase RluA family.

The enzyme catalyses a uridine in mRNA = a pseudouridine in mRNA. Its function is as follows. Pseudouridine synthase that catalyzes pseudouridylation of mRNAs. This Mus musculus (Mouse) protein is Pseudouridylate synthase RPUSD2.